The primary structure comprises 273 residues: 2-dehydro-3-deoxyphosphooctonate aldolase (273 aa).

Belongs to the KdsA family.

The protein localises to the cytoplasm. The catalysed reaction is D-arabinose 5-phosphate + phosphoenolpyruvate + H2O = 3-deoxy-alpha-D-manno-2-octulosonate-8-phosphate + phosphate. The protein operates within carbohydrate biosynthesis; 3-deoxy-D-manno-octulosonate biosynthesis; 3-deoxy-D-manno-octulosonate from D-ribulose 5-phosphate: step 2/3. It participates in bacterial outer membrane biogenesis; lipopolysaccharide biosynthesis. The sequence is that of 2-dehydro-3-deoxyphosphooctonate aldolase from Citrifermentans bemidjiense (strain ATCC BAA-1014 / DSM 16622 / JCM 12645 / Bem) (Geobacter bemidjiensis).